A 119-amino-acid chain; its full sequence is Protein TraH (119 aa).

Positions 1–67 (MSNPNEMTDE…ALDESRRPKA (67 aa)) are disordered. A compositionally biased stretch (low complexity) spans 41–54 (APSAPAEPSHSASP).

Functionally, the initiation process of transfer DNA synthesis requires the interaction of at least three plasmid-specific components (TraH, TraI, and TraJ) at the transfer origin resulting in the assembly of a specialized nucleoprotein complex - the relaxosome. This chain is Protein TraH (traH), found in Escherichia coli.